The sequence spans 1004 residues: 2-oxoglutarate dehydrogenase E1 component (1004 aa).

The protein belongs to the alpha-ketoglutarate dehydrogenase family. As to quaternary structure, homodimer. Part of the 2-oxoglutarate dehydrogenase (OGDH) complex composed of E1 (2-oxoglutarate dehydrogenase), E2 (dihydrolipoamide succinyltransferase) and E3 (dihydrolipoamide dehydrogenase); the complex contains multiple copies of the three enzymatic components (E1, E2 and E3). Thiamine diphosphate is required as a cofactor.

It catalyses the reaction N(6)-[(R)-lipoyl]-L-lysyl-[protein] + 2-oxoglutarate + H(+) = N(6)-[(R)-S(8)-succinyldihydrolipoyl]-L-lysyl-[protein] + CO2. E1 component of the 2-oxoglutarate dehydrogenase (OGDH) complex which catalyzes the decarboxylation of 2-oxoglutarate, the first step in the conversion of 2-oxoglutarate to succinyl-CoA and CO(2). The chain is 2-oxoglutarate dehydrogenase E1 component from Brucella ovis (strain ATCC 25840 / 63/290 / NCTC 10512).